A 631-amino-acid chain; its full sequence is MADPSAFYEPEEDELLSQLAIPIQNYQPLSEGDEYRRLQQLEQHAYAQQTAMAQEQEMEQLAVLELIPEDVKRFLVMFHQAILENDLPTITSMYESGWNKLTQAHYLNNEWPEAELIAPLVGNDQVFLTLYRELYFRHVYARLQPTIDDRFQSYENICELFNYLLNSEGPVPLDLPIQWLWDMLDEFVYQFTSFSHWRSSPKAKTEEELEMLAESPNIWSSYSVLNVLYSLVQKSQINEQLKAERAGKSVEEVTEVAGEYGSKPLYKNLGYFSLICLLHVHVLLGDPTLALQTMENVDLGNAAFLTRITACHVTTYYHVGCAYMALGRWPDAIKTFVSVLIFFIRMKQYHTRSYQYGSIAKTCERMYALLAICTTLSPGPSDENIMTIVKEHYGDQLAILQRGGPEALEAFKDLYLQACPKYLNVNPPPYEDASALEAWLANPPADATQRHLELFLSDVQAVQGVNGMRNLLKLYTSIDAAKLAAFSVSGEEEGEEEVLQQLMVLKSASSTYGRGQAETTLLDGERKVTNNLDFTIDGTMVHVEETTSHRRYAGFFIRNAEHAQRALTSIKSAPLPVRKPASSSAPAPATTAAPISKSGESAAPAPAEAPAAPEKKAGTWVPKSRQARIAA.

The PCI domain maps to 335 to 526 (TFVSVLIFFI…AETTLLDGER (192 aa)). Residues 571–631 (KSAPLPVRKP…PKSRQARIAA (61 aa)) form a disordered region. The span at 580 to 612 (PASSSAPAPATTAAPISKSGESAAPAPAEAPAA) shows a compositional bias: low complexity.

Belongs to the eIF-3 subunit L family. Component of the eukaryotic translation initiation factor 3 (eIF-3) complex.

It is found in the cytoplasm. Functionally, component of the eukaryotic translation initiation factor 3 (eIF-3) complex, which is involved in protein synthesis of a specialized repertoire of mRNAs and, together with other initiation factors, stimulates binding of mRNA and methionyl-tRNAi to the 40S ribosome. The eIF-3 complex specifically targets and initiates translation of a subset of mRNAs involved in cell proliferation. The sequence is that of Eukaryotic translation initiation factor 3 subunit L from Cryptococcus neoformans var. neoformans serotype D (strain B-3501A) (Filobasidiella neoformans).